The chain runs to 263 residues: Phosphate import ATP-binding protein PstB (263 aa).

Residues 17 to 258 (IDVRDLNFYY…PRRKETEDYI (242 aa)) form the ABC transporter domain. 49–56 (GPSGCGKS) provides a ligand contact to ATP.

It belongs to the ABC transporter superfamily. Phosphate importer (TC 3.A.1.7) family. In terms of assembly, the complex is composed of two ATP-binding proteins (PstB), two transmembrane proteins (PstC and PstA) and a solute-binding protein (PstS).

The protein localises to the cell inner membrane. It carries out the reaction phosphate(out) + ATP + H2O = ADP + 2 phosphate(in) + H(+). Its function is as follows. Part of the ABC transporter complex PstSACB involved in phosphate import. Responsible for energy coupling to the transport system. The polypeptide is Phosphate import ATP-binding protein PstB (Ralstonia nicotianae (strain ATCC BAA-1114 / GMI1000) (Ralstonia solanacearum)).